Consider the following 508-residue polypeptide: Rhamnogalacturonan I rhamnosyltransferase 1 (508 aa).

Residues 41 to 63 form a helical; Signal-anchor for type II membrane protein membrane-spanning segment; it reads LWMIRAVTVLLLWSCFVHLMALG. N-linked (GlcNAc...) asparagine glycosylation is found at Asn136, Asn202, and Asn223. 277–279 serves as a coordination point for substrate; the sequence is HLR. A glycan (N-linked (GlcNAc...) asparagine) is linked at Asn391.

Belongs to the glycosyltransferase GT106 family. Highly expressed in siliques. Expressed in stems and flowers. Expressed at low levels in roots and rosette leaves.

It is found in the golgi apparatus membrane. The catalysed reaction is alpha-D-galacturonosyl-[(1-&gt;2)-alpha-L-rhamnosyl-(1-&gt;4)-alpha-D-galacturonosyl](n) + UDP-beta-L-rhamnose = [(1-&gt;2)-alpha-L-rhamnosyl-(1-&gt;4)-alpha-D-galacturonosyl](n+1) + UDP + H(+). It participates in glycan metabolism; pectin biosynthesis. Its function is as follows. Glycosyltransferase involved in the formation of rhamnogalacturonan I (RG-I) oligosaccharides in the seed coat mucilage, which is a specialized cell wall with abundant RG-I. Transfers the rhamnose residue from UDP-beta-L-rhamnose to RG-I oligosaccharides. Prefers RG-I oligosaccharides with a degree of polymerization of 5 or larger than 5. Does not act on oligosaccharides with a degree of polymerization of 4 or smaller than 4. Does not require metal ions for its activity. The chain is Rhamnogalacturonan I rhamnosyltransferase 1 from Arabidopsis thaliana (Mouse-ear cress).